A 735-amino-acid chain; its full sequence is Funoran endo-beta-hydrolase (735 aa).

The N-terminal stretch at 1 to 27 is a signal peptide; that stretch reads MRVKSVYKKLSVSFILVMLSASQEVNS. Residue E200 is the Proton donor of the active site. The Nucleophile role is filled by E322.

This sequence belongs to the glycosyl hydrolase 86 family.

The catalysed reaction is Endohydrolysis of beta-(1-&gt;4)-linkages between beta-D-galactopyranose-6-sulfate and 3,6-anhydro-alpha-L-galactopyranose units in funoran.. The enzyme catalyses Hydrolysis of (1-&gt;4)-beta-D-galactosidic linkages in agarose, giving the tetramer as the predominant product.. Agarase activity is enhanced in the presence of NaCl. Agarase activity is significantly inhibited by Zn(2+) and slightly activated by several divalent ions including Mg(2+), Cd(2+) and Ca(2+). Functionally, endohydrolase that cleaves the beta-1,4 glycosidic bond between beta-D-galactopyranose-6-sulfate (G6S) and 3,6-anhydro-alpha-L-galactopyranose (LA) unit of funoran, a polysaccharide produced by red algae of the genus Gloiopeltis. It releases the disaccharide LA-G6S as the predominant end product. Also acts as a random endo-acting beta-agarase, which can hydrolyze agarose tetrasaccharides and hexasaccharides, and produces disaccharides as smallest products. Besides typical agarose oligosaccharides, it can use methylated galactoses. The enzyme exhibits higher catalytic efficiency towards agarose, but binds funoran preferentially. Has no activity on porphyran. This chain is Funoran endo-beta-hydrolase, found in Wenyingzhuangia aestuarii.